We begin with the raw amino-acid sequence, 190 residues long: UPF0316 protein Mboo_0605 (190 aa).

3 helical membrane-spanning segments follow: residues 3–23 (IGTFWSVAAIPLLILVARIAE), 41–61 (LAAYVGIVKTGIWLISTGLVL), and 67–87 (FWNLFAYLAGYGMGTVLGMEI).

This sequence belongs to the UPF0316 family.

The protein resides in the cell membrane. The polypeptide is UPF0316 protein Mboo_0605 (Methanoregula boonei (strain DSM 21154 / JCM 14090 / 6A8)).